A 67-amino-acid polypeptide reads, in one-letter code: Large ribosomal subunit protein eL24 (67 aa).

Zn(2+) is bound by residues cysteine 7, cysteine 10, cysteine 33, and cysteine 37. A C4-type zinc finger spans residues 7–37 (CDYCGTDIEPGTGTMFVHKDGATTHFCSSKC). Residues 48–60 (RNLEWTDTARGEA) show a composition bias toward basic and acidic residues. Residues 48 to 67 (RNLEWTDTARGEAGEAEDEA) are disordered.

The protein belongs to the eukaryotic ribosomal protein eL24 family. Part of the 50S ribosomal subunit. Forms a cluster with proteins L3 and L14. It depends on Zn(2+) as a cofactor.

Its function is as follows. Binds to the 23S rRNA. The chain is Large ribosomal subunit protein eL24 (rpl24e) from Haloarcula marismortui (strain ATCC 43049 / DSM 3752 / JCM 8966 / VKM B-1809) (Halobacterium marismortui).